A 600-amino-acid chain; its full sequence is Oligopeptide-binding protein OppA (600 aa).

Positions 1–22 are cleaved as a signal peptide; the sequence is MNKLKVTLLASSVVLAATLLSA. Cys-23 carries the N-palmitoyl cysteine lipid modification. Cys-23 is lipidated: S-diacylglycerol cysteine.

It belongs to the bacterial solute-binding protein 5 family. As to quaternary structure, the complex is composed of two ATP-binding proteins (OppD and OppF), two transmembrane proteins (OppB and OppC) and a solute-binding protein (OppA).

The protein resides in the cell membrane. In terms of biological role, part of the ABC transporter complex OppABCDF involved in the uptake of oligopeptides. Essential for uptake of peptides larger than three amino acids and for growth in milk. This is Oligopeptide-binding protein OppA from Lactococcus lactis subsp. lactis (Streptococcus lactis).